We begin with the raw amino-acid sequence, 62 residues long: KIDGYPVDNWNCKRICWYNNKYCYDLCKGLKADSGYCWGWTLSCYCEGLPDNARIKRGGRCN.

The region spanning 2 to 62 is the LCN-type CS-alpha/beta domain; that stretch reads IDGYPVDNWN…ARIKRGGRCN (61 aa). Intrachain disulfides connect cysteine 12–cysteine 61, cysteine 16–cysteine 37, cysteine 23–cysteine 44, and cysteine 27–cysteine 46.

In terms of tissue distribution, expressed by the venom gland.

The protein localises to the secreted. In terms of biological role, this neurotoxin acts on sodium and calcium channels. Potently inhibits native voltage-gated T-type calcium channel activity in mouse male germ cells and weakly blocks Cav3.3/CACNA1I channels expressed in Xenopus oocytes. In addition, significantly slows the inactivation of activated recombinant sodium channels (Nav1.5/SCN5A). The sequence is that of Kurtoxin-like I from Parabuthus granulatus (Granulated thick-tailed scorpion).